The primary structure comprises 500 residues: MNSFPWLTIIVVFPILTGSLIFLLPHRGNKVMKWYTLCICILELLLTTYTFCYHFQLDDPLTQLTENYKWIHFFDFYWRLGIDGLSIGPILLTGFITTLATLAAWPVTRDAQLFHFLMLAMYSGQIGSFSSRDLLLFFLMWEFELIPVYLLLSMWGGKKRLYSATKFILYTAGGSIFLLIGVLGIGLYGSNEPTLNFETLANQSYPVALEVIFYVGFLIAFAVKLPIIPFHTWLPDTHGEAHYSTCMLLAGILLKMGAYGLVRINMELLPHAHCLFSPGLIIVGAIQIIYAASTSPGQLNLKKRIAYSSISHMGFIIIGIGSLSDTGLNGAILQIISHGFIGAALFFLAGTSYDRIRLLYLDEMGGMAIPLPKLFTMLSILSMASLALPGLSGFVAELLVFFGIITSQKYLLMPKILIAFLMAIGMILTPIYSLSMLRQMFYGYKLFNVPNYYFFDSGPRELFVSISLLLPIIGIGIYPDFVLSLSVEKVEAIISHFFFR.

The next 14 membrane-spanning stretches (helical) occupy residues 4 to 24 (FPWL…IFLL), 37 to 57 (LCIC…HFQL), 87 to 107 (IGPI…AWPV), 111 to 131 (AQLF…SFSS), 134 to 154 (LLLF…LLSM), 167 to 187 (FILY…GIGL), 208 to 228 (ALEV…LPII), 242 to 262 (HYST…YGLV), 272 to 292 (AHCL…IYAA), 305 to 325 (IAYS…SLSD), 330 to 350 (GAIL…FLAG), 386 to 406 (LALP…GIIT), 416 to 436 (ILIA…SLSM), and 462 to 482 (LFVS…PDFV).

The protein belongs to the complex I subunit 4 family.

The protein localises to the plastid. The protein resides in the chloroplast thylakoid membrane. The enzyme catalyses a plastoquinone + NADH + (n+1) H(+)(in) = a plastoquinol + NAD(+) + n H(+)(out). The catalysed reaction is a plastoquinone + NADPH + (n+1) H(+)(in) = a plastoquinol + NADP(+) + n H(+)(out). The sequence is that of NAD(P)H-quinone oxidoreductase chain 4, chloroplastic from Oenothera biennis (German evening primrose).